We begin with the raw amino-acid sequence, 162 residues long: NADH-quinone oxidoreductase subunit I (162 aa).

2 consecutive 4Fe-4S ferredoxin-type domains span residues R54–E83 and T93–I122. Positions 63, 66, 69, 73, 102, 105, 108, and 112 each coordinate [4Fe-4S] cluster.

It belongs to the complex I 23 kDa subunit family. NDH-1 is composed of 14 different subunits. Subunits NuoA, H, J, K, L, M, N constitute the membrane sector of the complex. [4Fe-4S] cluster serves as cofactor.

It is found in the cell inner membrane. It catalyses the reaction a quinone + NADH + 5 H(+)(in) = a quinol + NAD(+) + 4 H(+)(out). Its function is as follows. NDH-1 shuttles electrons from NADH, via FMN and iron-sulfur (Fe-S) centers, to quinones in the respiratory chain. The immediate electron acceptor for the enzyme in this species is believed to be ubiquinone. Couples the redox reaction to proton translocation (for every two electrons transferred, four hydrogen ions are translocated across the cytoplasmic membrane), and thus conserves the redox energy in a proton gradient. In Paraburkholderia xenovorans (strain LB400), this protein is NADH-quinone oxidoreductase subunit I.